The following is a 322-amino-acid chain: MNEDLRIYDVAIVGGGAGGIFASTISNYFNLNSILIEKKSYLGGQPMELYPNKFIYDFPCFFEIKSSDVIKKLIQQNKEQKNSNIQLDTDILNITWQTINEQELFLFETNKNSFYAKKIILASGNGSFNPRKLEINNEPIDSPFIHYSLNLETEIYKNKKILVLGGGDSAVEWANYFVEEKITNNVAIIHRRNEYRSSSFMIDCLSKNNILQKLNYEIIDFNESNKTLTIKHKETEKEQTLPFDYVLVQYGQISSPINIELLNQINKEKGKYVIDLNQKTNIKNIYAIGDATHFYCKPNTIITACAEAVRALWHISKNKKDW.

Positions 37, 45, 50, 91, 128, and 290 each coordinate FAD.

The protein belongs to the ferredoxin--NADP reductase type 2 family. Homodimer. FAD serves as cofactor.

The catalysed reaction is 2 reduced [2Fe-2S]-[ferredoxin] + NADP(+) + H(+) = 2 oxidized [2Fe-2S]-[ferredoxin] + NADPH. The polypeptide is Ferredoxin--NADP reductase (Malacoplasma penetrans (strain HF-2) (Mycoplasma penetrans)).